The primary structure comprises 533 residues: Acid-sensing ion channel 3 (533 aa).

The Cytoplasmic segment spans residues 1-19; it reads MKPRSGLEEAQRRQASDIR. Residues 20-40 traverse the membrane as a helical segment; the sequence is VFASSCTMHGLGHIFGPGGLT. Position 40 is a phosphothreonine; by PKC (Thr40). Over 41–435 the chain is Extracellular; sequence LRRGLWATAV…EQKAAYEVSE (395 aa). Disulfide bonds link Cys93–Cys187, Cys165–Cys172, Cys283–Cys372, Cys317–Cys368, Cys321–Cys366, Cys330–Cys352, and Cys332–Cys344. Residue Asn176 is glycosylated (N-linked (GlcNAc...) asparagine). Positions 286-310 are disordered; the sequence is ASLDPDDFDPEPSDPLGSPRPRPSP. Asn400 carries N-linked (GlcNAc...) asparagine glycosylation. Residues 436–456 form a helical membrane-spanning segment; the sequence is LLGDIGGQMGLFIGASLLTIL. Positions 449 to 451 match the GAS motif; ion selectivity filter motif; it reads GAS. At 457-533 the chain is on the cytoplasmic side; it reads EILDYLCEVF…HRTCYLVTRL (77 aa). Ser523 bears the Phosphoserine; by PKC mark. Residues 530-533 carry the PDZ-binding motif; sequence VTRL.

Belongs to the amiloride-sensitive sodium channel (TC 1.A.6) family. ASIC3 subfamily. As to quaternary structure, can form homotrimeric channels. Heterotrimer; forms functional heterotrimers producing channel with different properties. Forms heterotrimers with ASIC2; gives rise to a biphasic current with a sustained current which discriminates poorly between Na(+) and K(+). Interacts with STOM; inhibits ASIC3 acid-evoked current. Interacts with LIN7B (via PDZ domain); increases ASIC3 expression at the plasma membrane. Interacts with MAGI1 (via PDZ domain); probably regulates ASIC3. Interacts with GOPC (via PDZ domain); probably regulates ASIC3. Interacts with DLG4 (via PDZ domain); reduces ASIC3 expression at the plasma membrane. Could be phosphorylated by PKC, promoting activation of ASIC2/ASIC3 heterotrimers. In terms of tissue distribution, expressed in sciatic nerve and dorsal root ganglion (at protein level). Expressed in sensory neurons of dorsal root ganglion. Expressed in Golgi interneurons in the granular layer. Also found in superior cervical ganglia, spinal cord and brain stem.

It localises to the cell membrane. Its subcellular location is the cytoplasm. It catalyses the reaction Na(+)(in) = Na(+)(out). The enzyme catalyses K(+)(in) = K(+)(out). It carries out the reaction Ca(2+)(in) = Ca(2+)(out). Inhibited by the diuretic drug amiloride. Inhibited by gadolinium ions. Inhibited by extracellular Ca(2+). Activated by lactate. Salicylic acid, diclofenac and aspirin inhibit the sustained current component. Activated by the vertebrate neuropeptides NPFF and NPSF, and the related FMRFamide. Specifically and reversibly inhibited by the a sea anemone toxin APETx2. ASIC3-containing channels are potentiated by the cono-RFamide CNF-Tx1.1, and probably CNF-Tx1.2 and CNF-Tx1.3 (AC P0DL71). Its function is as follows. Forms pH-gated heterotrimeric sodium channels that act as postsynaptic excitatory receptors in the nervous system. Upon extracellular acidification, these channels generate a biphasic current with a fast inactivating and a slow sustained phase. ASIC3 is more sensitive to protons and gates between closed, open, and desensitized states faster than other ASICs. Displays high selectivity for sodium ions but can also permit the permeation of other cations. As a neuronal acid sensor, probably contributes to mechanoreception, acid nociception, and heat nociception. By forming heterotrimeric channels with ASIC2, generates a biphasic current with a fast inactivating and a slow sustained phase, which in sensory neurons is proposed to mediate the pain induced by acidosis that occurs in ischemic, damaged or inflamed tissues. This is Acid-sensing ion channel 3 from Rattus norvegicus (Rat).